We begin with the raw amino-acid sequence, 4047 residues long: Cubilin homolog (4047 aa).

Residues 1-22 form the signal peptide; that stretch reads MIPNLQLFLSLILFGLLNHVSS. Residues Asn56, Asn92, and Asn127 are each glycosylated (N-linked (GlcNAc...) asparagine). Positions 168-205 constitute an EGF-like 1 domain; sequence AINACDPNKCSNGGTCIPSFGAKFTCLCPPHFTGTTCE. Cystine bridges form between Cys172–Cys183, Cys177–Cys193, Cys195–Cys204, Cys211–Cys227, Cys221–Cys236, Cys238–Cys247, Cys310–Cys321, Cys315–Cys330, Cys333–Cys344, Cys350–Cys363, Cys357–Cys372, Cys375–Cys386, Cys392–Cys403, Cys397–Cys418, Cys420–Cys434, Cys442–Cys453, Cys447–Cys463, Cys465–Cys474, Cys480–Cys491, Cys485–Cys500, Cys502–Cys511, Cys518–Cys544, Cys577–Cys601, Cys645–Cys667, Cys696–Cys719, and Cys769–Cys801. The 42-residue stretch at 207–248 folds into the EGF-like 2; calcium-binding domain; it reads DIDECSVYNGTTAGCQNNGTCINNRGGFECQCQSGYHGSLCQ. Residues Asn215 and Asn224 are each glycosylated (N-linked (GlcNAc...) asparagine). The EGF-like 3; calcium-binding domain occupies 306-345; the sequence is DVNECESNPCHPGVDCINLPGSFVCSGCPKGYKTDGNVCI. The EGF-like 4; calcium-binding domain occupies 346–387; that stretch reads DVNECEGEIRVCSPLSKCHNTLGSYYCDSCPTGYSGDGGNCV. EGF-like domains follow at residues 388–435, 438–475, and 476–512; these read KDDS…EGCV, ASNVCQNHNCVNAGKCKPTSDTEYKCECEAGFLGKFCE, and KTSPCQTNPCKNGGTCIAVENSAYCDCPEHFFGRACE. CUB domains lie at 518–641, 645–763, 769–934, 934–1061, 1065–1182, 1188–1300, 1304–1427, 1428–1558, 1560–1680, and 1691–1841; these read CGSH…WETV, CGYR…YKFT, CGAE…YEML, LCEK…YKTS, CGGV…FEAV, CDFT…YETI, CGGR…FTTL, CNGI…WNTL, CSRD…VEFV, and CGQV…MIPK. N-linked (GlcNAc...) asparagine glycosylation is found at Asn528, Asn537, and Asn583. Residues Asn775, Asn806, and Asn811 are each glycosylated (N-linked (GlcNAc...) asparagine). Cys877 and Cys896 are disulfide-bonded. Asn942 carries N-linked (GlcNAc...) asparagine glycosylation. Cystine bridges form between Cys1065-Cys1091, Cys1120-Cys1145, and Cys1188-Cys1211. Asn1133 is a glycosylation site (N-linked (GlcNAc...) asparagine). A glycan (N-linked (GlcNAc...) asparagine) is linked at Asn1229. The cysteines at positions 1234 and 1262 are disulfide-linked. The N-linked (GlcNAc...) asparagine glycan is linked to Asn1294. Cysteines 1304 and 1330 form a disulfide. N-linked (GlcNAc...) asparagine glycosylation occurs at Asn1353. Disulfide bonds link Cys1428–Cys1455, Cys1488–Cys1522, and Cys1560–Cys1586. Asn1513 is a glycosylation site (N-linked (GlcNAc...) asparagine). Asn1613, Asn1631, Asn1648, and Asn1674 each carry an N-linked (GlcNAc...) asparagine glycan. A disulfide bridge links Cys1614 with Cys1641. Cys1691 and Cys1720 are joined by a disulfide. N-linked (GlcNAc...) asparagine glycosylation is found at Asn1762, Asn1782, Asn1866, and Asn1890. Cys1955 and Cys1979 are disulfide-bonded. In terms of domain architecture, CUB 11 spans 1955 to 2083; that stretch reads CGGEVRHSQG…PLFKARYEKV (129 aa). Residues Asn2005, Asn2016, and Asn2017 are each glycosylated (N-linked (GlcNAc...) asparagine). Cys2006 and Cys2027 form a disulfide bridge. The tract at residues 2052-2071 is disordered; sequence ASDGNDDDDDTPDIDQQDSN. Over residues 2055–2067 the composition is skewed to acidic residues; that stretch reads GNDDDDDTPDIDQ. The N-linked (GlcNAc...) asparagine glycan is linked to Asn2193. 2 cysteine pairs are disulfide-bonded: Cys2207-Cys2238 and Cys2265-Cys2295. 5 consecutive CUB domains span residues 2207–2334, 2335–2463, 2467–2588, 2590–2717, and 2721–2859; these read CGGD…YRLT, CNSF…IKEQ, CPSG…YGIA, CGGT…VTMS, and CGGR…YMAI. Residues Asn2301 and Asn2305 are each glycosylated (N-linked (GlcNAc...) asparagine). 2 cysteine pairs are disulfide-bonded: Cys2335/Cys2368 and Cys2395/Cys2424. The N-linked (GlcNAc...) asparagine glycan is linked to Asn2434. Disulfide bonds link Cys2467/Cys2498 and Cys2590/Cys2619. 4 N-linked (GlcNAc...) asparagine glycosylation sites follow: Asn2599, Asn2645, Asn2657, and Asn2692. The cysteines at positions 2646 and 2668 are disulfide-linked. 2 disulfide bridges follow: Cys2721/Cys2747 and Cys2786/Cys2809. Asn2811, Asn2845, Asn2875, and Asn2988 each carry an N-linked (GlcNAc...) asparagine glycan. 4 cysteine pairs are disulfide-bonded: Cys2996-Cys3025, Cys3052-Cys3074, Cys3127-Cys3154, and Cys3181-Cys3217. 7 CUB domains span residues 2996 to 3121, 3127 to 3254, 3255 to 3385, 3387 to 3508, 3515 to 3641, 3645 to 3783, and 3786 to 3900; these read CGGV…YEFL, CGYH…WEAE, CGAI…YSIN, CGDN…VISS, CGGK…YSIV, CGGW…YNIL, and CNRT…YYTV. Asn3235 carries an N-linked (GlcNAc...) asparagine glycan. Cystine bridges form between Cys3255-Cys3281, Cys3315-Cys3335, and Cys3387-Cys3418. Residues Asn3421 and Asn3461 are each glycosylated (N-linked (GlcNAc...) asparagine). 2 disulfides stabilise this stretch: Cys3445-Cys3468 and Cys3515-Cys3544. Asn3635 carries an N-linked (GlcNAc...) asparagine glycan. 2 cysteine pairs are disulfide-bonded: Cys3645/Cys3680 and Cys3708/Cys3742. Residues Asn3770, Asn3787, Asn3812, Asn3858, and Asn3930 are each glycosylated (N-linked (GlcNAc...) asparagine). Disulfide bonds link Cys3786/Cys3815 and Cys3845/Cys3863.

It localises to the secreted. Cotransporter which plays a role in lipoprotein, vitamin and iron metabolism, by facilitating their uptake. This is Cubilin homolog from Caenorhabditis elegans.